The primary structure comprises 353 residues: Thiamine thiazole synthase 1, chloroplastic (353 aa).

The transit peptide at 1 to 48 (MATLTSSICSKPKASVFDPHKSSFHGVPIATQARLSPVKSTPVNLAVT) directs the protein to the chloroplast. Substrate-binding positions include A97, 117–118 (EQ), G125, and A190. C219 bears the 2,3-didehydroalanine (Cys) mark. Substrate contacts are provided by residues D221, H236, M288, and 298-300 (RMG).

This sequence belongs to the THI4 family. In terms of assembly, homooctamer. It depends on Fe cation as a cofactor. During the catalytic reaction, a sulfide is transferred from Cys-219 to a reaction intermediate, generating a dehydroalanine residue.

It localises to the plastid. The protein resides in the chloroplast. It carries out the reaction [ADP-thiazole synthase]-L-cysteine + glycine + NAD(+) = [ADP-thiazole synthase]-dehydroalanine + ADP-5-ethyl-4-methylthiazole-2-carboxylate + nicotinamide + 3 H2O + 2 H(+). In terms of biological role, involved in biosynthesis of the thiamine precursor thiazole. Catalyzes the conversion of NAD and glycine to adenosine diphosphate 5-(2-hydroxyethyl)-4-methylthiazole-2-carboxylic acid (ADT), an adenylated thiazole intermediate. The reaction includes an iron-dependent sulfide transfer from a conserved cysteine residue of the protein to a thiazole intermediate. The enzyme can only undergo a single turnover, which suggests it is a suicide enzyme. May have additional roles in adaptation to various stress conditions and in DNA damage tolerance. The protein is Thiamine thiazole synthase 1, chloroplastic of Vitis vinifera (Grape).